The sequence spans 1054 residues: RIRYKGIVCDRCGVEVTSAKVRRERMGHIELAAPVSHIWYFKGIPSRMGLVLDMSPRSLEEIIYFASYVVTKGGDTPLTEKQLLSEREYRELKAEYGNAFEAGMGAEAVQTLLANVDLEEEVTELKAELREATGQKRVRAVRRLDIIEAFVKSGNKPEWMVMDVIPIIPPDLRPMVQLEGGRFATSDLNDLYRRVINRNNRLKRLLELNAPGIIVQNEKRMLQEAADALVDNGRRGRPVTGPGNRPLKSLSHMLKGKQGRFRQNLLGKRVDYSGRSVIDVGPFLKMNQMGLPRQMAMELFRPFIMKELVKRDLAGNIRAAKRKIDRRDDDVMDVLEDVIKEHPVLLNRAPTLHRLGIQAFEPVLVSGKAMRLHPLVTEAYNADFDGDQMAIHVPLSDEAQAEARLLMLAAGHILAPKDGKPIVAPSQDMVIGNYYLTTEEAGREGEGMIFKDVNEVRTAYQNKYVHLHTRIGIQTSSLPAAKPFTAEQRSRIMLTSVGKLFFNDILPEDFPFLNEPTEANLHEIDNRFFLEPGEDIKAHYAETPILPPFKKGYLSDIIAEVYKIYKVTETSLLLDRMKDLGYDESTKSGLTVGVSDVTDLKEKPEIIADAHKQVATVTKQFRRGLITDSERYERVIAIWNKAKDDITEKLIEHFEPDNNIFMMSDSGARGNISNFTQLAGMRGLMAAPNGRIMELPIIANFREGLSVLEMFFSTHGARKGMTDTALKTADSGYMTRRLVDVAQDVIIRELDCHSDRGLDVTAIMNGNEVIEPLYERILGRYAQKSVFDPETGETLVNHNEMITEDIAKRIIEAGITTVTIRSAFTCNTEHGVCVRCYGRNMATGDVVEVGEAVGTVAAQSIGEPGTQLTMRTFHTGGVAGNDITQGLPRVQEIFEARNPKGRAMITEVTGEVTSIEENPADRTKEVTIQGETDTRTYTLPMTARMRVGEGDRIHRGETLNEGSADPKEIIQVRDTLATENYIVHEVQKVYRMQGVEISDKHIEVMARQMLRKVRVMDPGETDLLPGTLMDIAQFRDANEDTLLKGGLPATGRPV.

Mg(2+) contacts are provided by Asp-383, Asp-385, and Asp-387. Zn(2+) is bound by residues Cys-752, Cys-826, Cys-833, and Cys-836.

This sequence belongs to the RNA polymerase beta' chain family. As to quaternary structure, the RNAP catalytic core consists of 2 alpha, 1 beta, 1 beta' and 1 omega subunit. When a sigma factor is associated with the core the holoenzyme is formed, which can initiate transcription. Mg(2+) is required as a cofactor. Zn(2+) serves as cofactor.

The enzyme catalyses RNA(n) + a ribonucleoside 5'-triphosphate = RNA(n+1) + diphosphate. DNA-dependent RNA polymerase catalyzes the transcription of DNA into RNA using the four ribonucleoside triphosphates as substrates. In Weissella paramesenteroides (Leuconostoc paramesenteroides), this protein is DNA-directed RNA polymerase subunit beta'.